Consider the following 245-residue polypeptide: Fibroblast growth factor-binding protein 3 (245 aa).

The signal sequence occupies residues Met-1–Gly-28. The segment at Ala-33–Phe-52 is disordered. Intrachain disulfides connect Cys-60–Cys-81 and Cys-91–Cys-125. The disordered stretch occupies residues Cys-136 to Gly-216. Residues Arg-170 to Ser-180 show a composition bias toward low complexity. Cys-228 and Cys-236 are joined by a disulfide.

The protein belongs to the fibroblast growth factor-binding protein family. As to quaternary structure, interacts with FGF2. In the adult, highly expressed in brain with lower levels in ovary. In the embryo, highest levels are found in the brain and spinal cord at 14 dpc and expression is almost completely restricted to the brain by 18 dpc. In the adult and postnatal brain, highly expressed in the orbitofrontal cortex where it is concentrated primarily in differentiated neurons.

The protein resides in the secreted. Functionally, heparin-binding protein which binds to FGF2, prevents binding of FGF2 to heparin and probably inhibits immobilization of FGF2 on extracellular matrix glycosaminoglycans, allowing its release and subsequent activation of FGFR signaling which leads to increased vascular permeability. This is Fibroblast growth factor-binding protein 3 (Fgfbp3) from Mus musculus (Mouse).